An 874-amino-acid polypeptide reads, in one-letter code: Pentatricopeptide repeat-containing protein At2g17140 (874 aa).

PPR repeat units follow at residues 111–145, 146–180, 181–215, 216–250, 251–285, 290–320, 325–359, 360–394, 395–429, 430–464, 465–499, 523–557, 558–592, 593–627, 628–662, 663–693, 697–731, 732–766, and 767–797; these read SVYLYNLLLESCIKERRVEFVSWLYKDMVLCGIAP, QTYTFNLLIRALCDSSCVDAARELFDEMPEKGCKP, NEFTFGILVRGYCKAGLTDKGLELLNAMESFGVLP, NKVIYNTIVSSFCREGRNDDSEKMVEKMREEGLVP, DIVTFNSRISALCKEGKVLDASRIFSDMELDEYLG, NSITYNLMLKGFCKVGLLEDAKTLFESIREN, SLQSYNIWLQGLVRHGKFIEAETVLKQMTDKGIGP, SIYSYNILMDGLCKLGMLSDAKTIVGLMKRNGVCP, DAVTYGCLLHGYCSVGKVDAAKSLLQEMMRNNCLP, NAYTCNILLHSLWKMGRISEAEELLRKMNEKGYGL, DTVTCNIIVDGLCGSGELDKAIEIVKGMRVHGSAA, DLITYSTLLNGLCKAGRFAEAKNLFAEMMGEKLQP, DSVAYNIFIHHFCKQGKISSAFRVLKDMEKKGCHK, SLETYNSLILGLGIKNQIFEIHGLMDEMKEKGISP, NICTYNTAIQYLCEGEKVEDATNLLDEMMQKNIAP, NVFSFKYLIEAFCKVPDFDMAQEVFETAVSI, KEGLYSLMFNELLAAGQLLKATELLEAVLDRGFEL, GTFLYKDLVESLCKKDELEVASGILHKMIDRGYGF, and DPAALMPVIDGLGKMGNKKEANSFADKMMEM.

It belongs to the PPR family. P subfamily.

The chain is Pentatricopeptide repeat-containing protein At2g17140 from Arabidopsis thaliana (Mouse-ear cress).